Here is a 279-residue protein sequence, read N- to C-terminus: Proteasome subunit beta (279 aa).

Positions 1-51 (MTFDASGRLPEAFLTPGGSSFMDFLAGHAPDLLPGRRSLGTGDLSKDVPHG) are cleaved as a propeptide — removed in mature form; by autocatalysis. Thr52 functions as the Nucleophile in the catalytic mechanism.

This sequence belongs to the peptidase T1B family. In terms of assembly, the 20S proteasome core is composed of 14 alpha and 14 beta subunits that assemble into four stacked heptameric rings, resulting in a barrel-shaped structure. The two inner rings, each composed of seven catalytic beta subunits, are sandwiched by two outer rings, each composed of seven alpha subunits. The catalytic chamber with the active sites is on the inside of the barrel. Has a gated structure, the ends of the cylinder being occluded by the N-termini of the alpha-subunits. Is capped by the proteasome-associated ATPase, ARC.

Its subcellular location is the cytoplasm. It carries out the reaction Cleavage of peptide bonds with very broad specificity.. Its pathway is protein degradation; proteasomal Pup-dependent pathway. With respect to regulation, the formation of the proteasomal ATPase ARC-20S proteasome complex, likely via the docking of the C-termini of ARC into the intersubunit pockets in the alpha-rings, may trigger opening of the gate for substrate entry. Interconversion between the open-gate and close-gate conformations leads to a dynamic regulation of the 20S proteasome proteolysis activity. In terms of biological role, component of the proteasome core, a large protease complex with broad specificity involved in protein degradation. The protein is Proteasome subunit beta of Kribbella flavida (strain DSM 17836 / JCM 10339 / NBRC 14399).